The chain runs to 119 residues: Beta-2-microglobulin (119 aa).

The N-terminal stretch at 1–20 (MARFVVVALLVLLSLSGLEA) is a signal peptide. The Ig-like C1-type domain maps to 25–114 (PKIQVYSRHP…VTFSTPKTVK (90 aa)). Cysteines 45 and 100 form a disulfide.

It belongs to the beta-2-microglobulin family. In terms of assembly, heterodimer of an alpha chain and a beta chain. Beta-2-microglobulin is the beta-chain of major histocompatibility complex class I molecules.

It localises to the secreted. In terms of biological role, component of the class I major histocompatibility complex (MHC). Involved in the presentation of peptide antigens to the immune system. In Callimico goeldii (Goeldi's marmoset), this protein is Beta-2-microglobulin (B2M).